The sequence spans 388 residues: N-acetylneuraminate epimerase (388 aa).

A signal peptide spans 1–26; it reads MFSLIRAKRLAIGIAALAWSTGAVMA. Kelch repeat units follow at residues 48 to 92, 94 to 147, 149 to 186, 187 to 232, 236 to 285, 307 to 356, and 358 to 387; these read MAYV…AAAG, KIFA…VGLA, GRIA…KLVD, SYMG…ATMG, FLLV…VAGA, ANAA…DAPG, and LLVV…LSVE. The Proton acceptor role is filled by Glu-242.

It belongs to the NanM family. As to quaternary structure, homodimer.

The protein localises to the periplasm. It catalyses the reaction N-acetyl-alpha-neuraminate = N-acetyl-beta-neuraminate. Converts alpha-N-acetylneuranimic acid (Neu5Ac) to the beta-anomer, accelerating the equilibrium between the alpha- and beta-anomers. Probably facilitates sialidase-negative bacteria to compete successfully for limited amounts of extracellular Neu5Ac, which is likely taken up in the beta-anomer. In addition, the rapid removal of sialic acid from solution might be advantageous to the bacterium to damp down host responses. The sequence is that of N-acetylneuraminate epimerase from Brucella melitensis biotype 1 (strain ATCC 23456 / CCUG 17765 / NCTC 10094 / 16M).